The chain runs to 373 residues: Mating-type protein A-2 (373 aa).

The interval methionine 1–alanine 22 is disordered.

The protein to P.anserina SMR1.

In terms of biological role, required, together with mating-type protein A-3, for efficient ascospore formation. This chain is Mating-type protein A-2 (matA-2), found in Neurospora crassa (strain ATCC 24698 / 74-OR23-1A / CBS 708.71 / DSM 1257 / FGSC 987).